We begin with the raw amino-acid sequence, 374 residues long: Coiled-coil domain-containing protein 89 (374 aa).

Residues 1 to 38 form a disordered region; sequence MRAPMPQKEQAPRMDTSPPEERLEKQNEKLNNQEEEME. Thr16 is subject to Phosphothreonine. Basic and acidic residues predominate over residues 19–32; that stretch reads PEERLEKQNEKLNN. Positions 19–350 form a coiled coil; the sequence is PEERLEKQNE…YDELRLQSEA (332 aa).

Belongs to the CCDC89 family. Interacts with HEY1.

The protein localises to the cytoplasm. The protein resides in the nucleus. This chain is Coiled-coil domain-containing protein 89 (CCDC89), found in Macaca fascicularis (Crab-eating macaque).